The primary structure comprises 57 residues: Sperm histone (57 aa).

Residues 1 to 57 (MARYRRTRTRSRSRRRRRSRRRRSSRRRRYGRSRRSYRSVGRRRRRYGRRRRRRRRY) are disordered. Thr9 bears the Phosphothreonine mark.

This sequence belongs to the protamine P1 family. In terms of tissue distribution, testis.

It is found in the nucleus. Its subcellular location is the chromosome. In terms of biological role, protamines substitute for histones in the chromatin of sperm during the haploid phase of spermatogenesis. They compact sperm DNA into a highly condensed, stable and inactive complex. This chain is Sperm histone, found in Coturnix japonica (Japanese quail).